The following is a 294-amino-acid chain: 33 kDa chaperonin (294 aa).

2 disulfide bridges follow: Cys-238-Cys-240 and Cys-271-Cys-274.

It belongs to the HSP33 family. Post-translationally, under oxidizing conditions two disulfide bonds are formed involving the reactive cysteines. Under reducing conditions zinc is bound to the reactive cysteines and the protein is inactive.

The protein resides in the cytoplasm. In terms of biological role, redox regulated molecular chaperone. Protects both thermally unfolding and oxidatively damaged proteins from irreversible aggregation. Plays an important role in the bacterial defense system toward oxidative stress. This Clostridium tetani (strain Massachusetts / E88) protein is 33 kDa chaperonin.